The following is a 519-amino-acid chain: S-type anion channel SLAH2 (519 aa).

Residues 1–31 (MNNPRSVSPLVSPANHSDLLENQRQSGSGDF) form a disordered region. The Cytoplasmic portion of the chain corresponds to 1–140 (MNNPRSVSPL…LPEDKTWPFL (140 aa)). Residues 20–29 (LENQRQSGSG) show a composition bias toward polar residues. Serine 77 and serine 85 each carry phosphoserine. The helical transmembrane segment at 141 to 161 (LRFPITSYGMCLGVSSQAIMW) threads the bilayer. Over 162 to 185 (KTLATTEAEKFLHVTQVINHVLWW) the chain is Extracellular. Residues 186–206 (ISLLLLLAVSITYLFKTILFF) form a helical membrane-spanning segment. Residues 207 to 220 (EAVRREFRHPIRVN) are Cytoplasmic-facing. A helical transmembrane segment spans residues 221–241 (FFFAPLISILFLALGIPHSII). The Extracellular portion of the chain corresponds to 242–247 (SHLPST). Residues 248 to 268 (LWYFLMAPILFLEMKIYGQWM) traverse the membrane as a helical segment. Residues 269–281 (SGGQRRLSKVANP) are Cytoplasmic-facing. A helical membrane pass occupies residues 282–302 (TNHLSIVGNFAGALLGASMGL). Residues 303 to 304 (KE) lie on the Extracellular side of the membrane. The helical transmembrane segment at 305–325 (GPIFFFAIGLAYYLVLFVTLY) threads the bilayer. The Cytoplasmic portion of the chain corresponds to 326-340 (QRLPTNETLPKELHP). The chain crosses the membrane as a helical span at residues 341-361 (VFFLFVAAPAVASMAWTKISA). Position 362 (serine 362) is a topological domain, extracellular. A helical transmembrane segment spans residues 363-383 (FDLGSRLAYFISLFLYFSLVC). Residues 384–389 (RINLFR) are Cytoplasmic-facing. Residues 390 to 410 (GFKFSLAWWAYTFPMTAVASA) traverse the membrane as a helical segment. Topologically, residues 411 to 424 (TIKYSDEVTGVATK) are extracellular. A helical membrane pass occupies residues 425–445 (ILSVVMSGAATLTVIAVLGLT). Over 446 to 519 (VMHAFVQRDL…VDSSTVQNSN (74 aa)) the chain is Cytoplasmic. Positions 495–519 (PEDNQIDLESPPLVNVDSSTVQNSN) are disordered. Over residues 510-519 (VDSSTVQNSN) the composition is skewed to polar residues.

It belongs to the SLAC1 S-type anion channel family. As to quaternary structure, homotrimer. In terms of tissue distribution, expressed in lateral root primordia and tap root tips.

It is found in the cell membrane. In terms of biological role, slow, weak voltage-dependent S-type anion efflux channel involved in maintenance of anion homeostasis. This is S-type anion channel SLAH2 (SLAH2) from Arabidopsis thaliana (Mouse-ear cress).